A 584-amino-acid chain; its full sequence is Transcription factor COE1 (584 aa).

At methionine 1 the chain carries N-acetylmethionine. Over residues 1-14 (MFGIQESIQRSGSS) the composition is skewed to polar residues. Residues 1 to 21 (MFGIQESIQRSGSSMKEEPLG) form a disordered region. Lysine 16 is covalently cross-linked (Glycyl lysine isopeptide (Lys-Gly) (interchain with G-Cter in SUMO1); alternate). Lysine 16 participates in a covalent cross-link: Glycyl lysine isopeptide (Lys-Gly) (interchain with G-Cter in SUMO2); alternate. Residues 63-66 (RKSN) are interaction with DNA. The segment at 151 to 170 (CRVLLTHEIMCSRCCDKKSC) adopts a C5-type zinc-finger fold. 2 interaction with DNA regions span residues 197–204 (NCLKNAGN) and 236–239 (NNSK). In terms of domain architecture, IPT/TIG spans 255–338 (PCIKAISPSE…KGTPGRFIYT (84 aa)). The disordered stretch occupies residues 450–473 (GFTRNSSSVSPHGYVPSTTPQQTN).

Belongs to the COE family. Homodimer. Interacts with ZNF423 and ZNF521, leading to prevent EBF1 to bind DNA and activate target genes. Interacts with CCR4-NOT component CNOT3. As to expression, expressed exclusively in olfactory receptor neurons and their precursors.

It is found in the nucleus. Key pioneer transcription factor of B-cell specification and commitment. Recognizes variations of the palindromic sequence 5'-ATTCCCNNGGGAATT-3'. Operates in a transcription factor network to activate B-cell-specific genes and repress genes associated with alternative cell fates. For instance, positively regulates many B-cell specific genes including BCR or CD40 while repressing genes that direct cells into alternative lineages, including GATA3 and TCF7 for the T-cell lineage. In addition to its role during lymphopoiesis, controls the thermogenic gene program in adipocytes during development and in response to environmental cold. In Rattus norvegicus (Rat), this protein is Transcription factor COE1 (Ebf1).